We begin with the raw amino-acid sequence, 196 residues long: Molybdenum cofactor guanylyltransferase (196 aa).

GTP is bound by residues 10-12 (LAG), K23, N51, D69, and D99. D99 is a Mg(2+) binding site.

Belongs to the MobA family. In terms of assembly, monomer. Mg(2+) serves as cofactor.

It localises to the cytoplasm. The enzyme catalyses Mo-molybdopterin + GTP + H(+) = Mo-molybdopterin guanine dinucleotide + diphosphate. Transfers a GMP moiety from GTP to Mo-molybdopterin (Mo-MPT) cofactor (Moco or molybdenum cofactor) to form Mo-molybdopterin guanine dinucleotide (Mo-MGD) cofactor. This is Molybdenum cofactor guanylyltransferase from Shewanella amazonensis (strain ATCC BAA-1098 / SB2B).